We begin with the raw amino-acid sequence, 118 residues long: UPF0295 protein BcerKBAB4_0454 (118 aa).

2 consecutive transmembrane segments (helical) span residues 12–32 (IRTF…LGVF) and 43–63 (FMMV…WIGM).

It belongs to the UPF0295 family.

The protein resides in the cell membrane. The polypeptide is UPF0295 protein BcerKBAB4_0454 (Bacillus mycoides (strain KBAB4) (Bacillus weihenstephanensis)).